We begin with the raw amino-acid sequence, 96 residues long: Protein Vpr (96 aa).

The interval 1-42 (MEQAPEDQGPQREPYNEWTLELLEELKREAVRHFPRPWLHGL) is homooligomerization. 3 positions are modified to phosphoserine; by host: Ser-79, Ser-94, and Ser-96.

It belongs to the HIV-1 VPR protein family. Homooligomer, may form homodimer. Interacts with p6-gag region of the Pr55 Gag precursor protein through a (Leu-X-X)4 motif near the C-terminus of the P6gag protein. Interacts with host UNG. May interact with host RAD23A/HHR23A. Interacts with host VPRBP/DCAF1, leading to hijack the CUL4A-RBX1-DDB1-DCAF1/VPRBP complex, mediating ubiquitination of host proteins such as TERT and ZGPAT and arrest of the cell cycle in G2 phase. Post-translationally, phosphorylated on several residues by host. These phosphorylations regulate VPR activity for the nuclear import of the HIV-1 pre-integration complex.

Its subcellular location is the virion. The protein localises to the host nucleus. The protein resides in the host extracellular space. Its function is as follows. During virus replication, may deplete host UNG protein, and incude G2-M cell cycle arrest. Acts by targeting specific host proteins for degradation by the 26S proteasome, through association with the cellular CUL4A-DDB1 E3 ligase complex by direct interaction with host VPRPB/DCAF-1. Cell cycle arrest reportedly occurs within hours of infection and is not blocked by antiviral agents, suggesting that it is initiated by the VPR carried into the virion. Additionally, VPR induces apoptosis in a cell cycle dependent manner suggesting that these two effects are mechanistically linked. Detected in the serum and cerebrospinal fluid of AIDS patient, VPR may also induce cell death to bystander cells. In terms of biological role, during virus entry, plays a role in the transport of the viral pre-integration (PIC) complex to the host nucleus. This function is crucial for viral infection of non-dividing macrophages. May act directly at the nuclear pore complex, by binding nucleoporins phenylalanine-glycine (FG)-repeat regions. The sequence is that of Protein Vpr from Human immunodeficiency virus type 1 group M subtype C (isolate 92BR025) (HIV-1).